The sequence spans 451 residues: C4-dicarboxylate transport protein (451 aa).

A run of 9 helical transmembrane segments spans residues 17-37 (SLYV…HFYP), 53-73 (LIKM…IAGM), 85-105 (LALL…LIVV), 153-173 (AFAK…GFAL), 193-213 (VLFT…FGAM), 231-251 (LMGS…GLIA), 306-326 (GYSF…VFIA), 339-359 (ITLL…TGSG), and 361-381 (IVLA…LALI).

The protein belongs to the dicarboxylate/amino acid:cation symporter (DAACS) (TC 2.A.23) family.

Its subcellular location is the cell inner membrane. Responsible for the transport of dicarboxylates such as succinate, fumarate, and malate from the periplasm across the membrane. The sequence is that of C4-dicarboxylate transport protein from Paracidovorax citrulli (strain AAC00-1) (Acidovorax citrulli).